Here is a 483-residue protein sequence, read N- to C-terminus: Aspartyl/glutamyl-tRNA(Asn/Gln) amidotransferase subunit B (483 aa).

Belongs to the GatB/GatE family. GatB subfamily. In terms of assembly, heterotrimer of A, B and C subunits.

The catalysed reaction is L-glutamyl-tRNA(Gln) + L-glutamine + ATP + H2O = L-glutaminyl-tRNA(Gln) + L-glutamate + ADP + phosphate + H(+). It catalyses the reaction L-aspartyl-tRNA(Asn) + L-glutamine + ATP + H2O = L-asparaginyl-tRNA(Asn) + L-glutamate + ADP + phosphate + 2 H(+). Its function is as follows. Allows the formation of correctly charged Asn-tRNA(Asn) or Gln-tRNA(Gln) through the transamidation of misacylated Asp-tRNA(Asn) or Glu-tRNA(Gln) in organisms which lack either or both of asparaginyl-tRNA or glutaminyl-tRNA synthetases. The reaction takes place in the presence of glutamine and ATP through an activated phospho-Asp-tRNA(Asn) or phospho-Glu-tRNA(Gln). The polypeptide is Aspartyl/glutamyl-tRNA(Asn/Gln) amidotransferase subunit B (Anaeromyxobacter sp. (strain Fw109-5)).